A 96-amino-acid chain; its full sequence is MHVTLVEINVHEDKVDEFIEVFRQNHLGSVQEEGNLRFDVLQDPEVNSRFYIYEAYKDEDAVAFHKTTPHYKTCVAKLESLMTGPRKKRLFNGLMP.

One can recognise an ABM domain in the interval 2 to 91 (HVTLVEINVH…MTGPRKKRLF (90 aa)).

It belongs to the LsrG family. As to quaternary structure, homodimer.

It localises to the cytoplasm. The catalysed reaction is (2S)-2-hydroxy-3,4-dioxopentyl phosphate = 3-hydroxy-2,4-dioxopentyl phosphate. Functionally, involved in the degradation of phospho-AI-2, thereby terminating induction of the lsr operon and closing the AI-2 signaling cycle. Catalyzes the conversion of (4S)-4-hydroxy-5-phosphonooxypentane-2,3-dione (P-DPD) to 3-hydroxy-5-phosphonooxypentane-2,4-dione (P-HPD). This Escherichia coli O157:H7 protein is (4S)-4-hydroxy-5-phosphonooxypentane-2,3-dione isomerase.